The sequence spans 130 residues: Small ribosomal subunit protein uS11 (130 aa).

The protein belongs to the universal ribosomal protein uS11 family. In terms of assembly, part of the 30S ribosomal subunit. Interacts with proteins S7 and S18. Binds to IF-3.

In terms of biological role, located on the platform of the 30S subunit, it bridges several disparate RNA helices of the 16S rRNA. Forms part of the Shine-Dalgarno cleft in the 70S ribosome. The chain is Small ribosomal subunit protein uS11 from Pseudoalteromonas atlantica (strain T6c / ATCC BAA-1087).